The sequence spans 364 residues: MVQEIDLGLTCDMHVHVREGAMCELVTPKIRDGGVSIAYIMPNLQPPITTLDRVIEYKKTLQKLAPKTTFLMSFYLSKDLTPDLIHEAAQQHAIRGVKCYPAGVTTNSAAGVDPNDFSAFYPIFKAMQEENLVLNLHGEKPSVHDGDKEPIHVLNAEEAFLPALKKLHNDFPNLKIILEHCTSESAIKTIEDINKNVKKATDVKVAATLTAHHLFLTIDDWAGNPVNFCKPVAKLPNDKKALVKAAVSGKPYFFFGSDSAPHPVQNKANYEGVCAGVYSQSFAIPYIAQVFEEQNALENLKGFVSDFGISFYEVKDSEVASSDKAILFKKEQVIPQVISDGKDISIIPFKAGDKLSWSVRWEPR.

Positions 14, 16, 98, 137, 180, and 258 each coordinate Zn(2+). K98 is modified (N6-carboxylysine).

The protein belongs to the metallo-dependent hydrolases superfamily. DHOase family. Class II DHOase subfamily. It depends on Zn(2+) as a cofactor.

The enzyme catalyses (S)-dihydroorotate + H2O = N-carbamoyl-L-aspartate + H(+). Its pathway is pyrimidine metabolism; UMP biosynthesis via de novo pathway; (S)-dihydroorotate from bicarbonate: step 3/3. Its function is as follows. Catalyzes the conversion of ureidosuccinic acid (USA) to dihydroorotate, the third step of the de novo pyrimidine biosynthetic pathway. The sequence is that of Dihydroorotase (URA4) from Saccharomyces cerevisiae (strain ATCC 204508 / S288c) (Baker's yeast).